Reading from the N-terminus, the 356-residue chain is tRNA N6-adenosine threonylcarbamoyltransferase (356 aa).

Residues His-115 and His-119 each contribute to the Fe cation site. Substrate-binding positions include 138–142 (LVSGG), Asp-171, Gly-184, and Asn-283. Asp-311 serves as a coordination point for Fe cation.

This sequence belongs to the KAE1 / TsaD family. Fe(2+) serves as cofactor.

The protein localises to the cytoplasm. The enzyme catalyses L-threonylcarbamoyladenylate + adenosine(37) in tRNA = N(6)-L-threonylcarbamoyladenosine(37) in tRNA + AMP + H(+). Its function is as follows. Required for the formation of a threonylcarbamoyl group on adenosine at position 37 (t(6)A37) in tRNAs that read codons beginning with adenine. Is involved in the transfer of the threonylcarbamoyl moiety of threonylcarbamoyl-AMP (TC-AMP) to the N6 group of A37, together with TsaE and TsaB. TsaD likely plays a direct catalytic role in this reaction. The sequence is that of tRNA N6-adenosine threonylcarbamoyltransferase from Prochlorococcus marinus (strain NATL1A).